The chain runs to 478 residues: Tubulin gamma chain (478 aa).

141-147 (AGGTGSG) contributes to the GTP binding site. Residues 451–478 (ISQKESSSLANENGNGANNKPGKSAMAL) are disordered. Polar residues predominate over residues 459–468 (LANENGNGAN).

It belongs to the tubulin family.

The protein resides in the cytoplasm. Its subcellular location is the cytoskeleton. The protein localises to the microtubule organizing center. It localises to the centrosome. Its function is as follows. Tubulin is the major constituent of microtubules. The gamma chain is found at microtubule organizing centers (MTOC) such as the spindle poles or the centrosome, suggesting that it is involved in the minus-end nucleation of microtubule assembly. The protein is Tubulin gamma chain of Reticulomyxa filosa.